Here is a 340-residue protein sequence, read N- to C-terminus: Glyceraldehyde-3-phosphate dehydrogenase, cytosolic (340 aa).

NAD(+)-binding positions include 16–17 (RI), Asp38, and Arg85. D-glyceraldehyde 3-phosphate-binding positions include 156 to 158 (SCT), Thr187, 216 to 217 (TG), and Arg239. Cys157 serves as the catalytic Nucleophile. Residue Asn321 coordinates NAD(+).

This sequence belongs to the glyceraldehyde-3-phosphate dehydrogenase family. In terms of assembly, homotetramer.

Its subcellular location is the cytoplasm. The enzyme catalyses D-glyceraldehyde 3-phosphate + phosphate + NAD(+) = (2R)-3-phospho-glyceroyl phosphate + NADH + H(+). It participates in carbohydrate degradation; glycolysis; pyruvate from D-glyceraldehyde 3-phosphate: step 1/5. Its function is as follows. Key enzyme in glycolysis that catalyzes the first step of the pathway by converting D-glyceraldehyde 3-phosphate (G3P) into 3-phospho-D-glyceroyl phosphate. Essential for the maintenance of cellular ATP levels and carbohydrate metabolism. This Ginkgo biloba (Ginkgo) protein is Glyceraldehyde-3-phosphate dehydrogenase, cytosolic.